We begin with the raw amino-acid sequence, 399 residues long: Pre-mycofactocin synthase (399 aa).

An FMN hydroxy acid dehydrogenase domain is found at 4–386; sequence ARDIWFETVA…VPEDILVPEG (383 aa). Residues Ser-111 and Gln-131 each contribute to the FMN site. An a 2-oxocarboxylate-binding site is contributed by Tyr-133. Thr-159 contributes to the FMN binding site. A 2-oxocarboxylate is bound at residue Arg-168. Position 257 (Lys-257) interacts with FMN. His-281 (proton acceptor) is an active-site residue. FMN is bound by residues 312–316 and 335–336; these read DGGIR and GR.

The protein belongs to the FMN-dependent alpha-hydroxy acid dehydrogenase family. It depends on FMN as a cofactor.

It catalyses the reaction 3-amino-5-[(4-hydroxyphenyl)methyl]-4,4-dimethyl-2-pyrrolidin-2-one + O2 + H2O = pre-mycofactocin + H2O2 + NH4(+). Functionally, involved in the biosynthesis of the enzyme cofactor mycofactocin (MFT). Catalyzes the oxidative deamination of AHDP (3-amino-5-[(4-hydroxyphenyl)methyl]-4,4-dimethyl-2-pyrrolidin-2-one), forming an alpha-keto amide moiety on the resulting molecule, which is called pre-mycofactocin (PMFT). This reaction occurs via a 5-[(4-hydroxyphenyl)methyl]-3-imino-4,4-dimethylpyrrolidin-2-one intermediate, which converts to PMFT. The alpha-keto amide moiety is the redox-active center for the redox activity of mycofactocin. Is required for the in vivo ethanol assimilation in M.smegmatis. The sequence is that of Pre-mycofactocin synthase from Mycolicibacterium smegmatis (strain ATCC 700084 / mc(2)155) (Mycobacterium smegmatis).